The primary structure comprises 459 residues: MENIIKSNPYSNALISTAENPQVAQSGALAGIALAVKDNICTNEMHTTCASGILETFTSPFDATVVDLLKQEGVSIVGKANLDEFGMGSDNANSWFGPVFNPLYPDEPHTPGGSSGGSAAAVAADMCHFALGTDTGGSVRYPAAQCSVIGLKPSYGLISRHGVIAYAQSLDTVGILTKDIDLLEKVFNILNKYDPLDPTSLTPHKRAKLKPPKPHRKLTFGLVKEYNIKGISENVKMAWSQIMDELIKMGHEVVTCSIPAIKNALPAYYAIAPAEASSNFARFDGIRYGSRAPEDRGEHGTLYAPTRQEYFGNEVKRRMWLGTWNLSTDAFNHDYIRSQKIRRILQEDFDEVFNRPNVLSGNEGQKANDEPGVDFIIAPTSNCAPYPLSKLNDSAPVDTYLNDVLTVPASLTGIPSLNIPWKTKQGNVGMQIMGQYGDDLGVMKVGRLLLDKCKELHQD.

Catalysis depends on charge relay system residues Lys37 and Ser114. Ser138 (acyl-ester intermediate) is an active-site residue.

The protein belongs to the amidase family. GatA subfamily. In terms of assembly, subunit of the heterotrimeric GatFAB amidotransferase (AdT) complex, composed of A, B and F subunits.

Its subcellular location is the mitochondrion. It catalyses the reaction L-glutamyl-tRNA(Gln) + L-glutamine + ATP + H2O = L-glutaminyl-tRNA(Gln) + L-glutamate + ADP + phosphate + H(+). Allows the formation of correctly charged Gln-tRNA(Gln) through the transamidation of misacylated Glu-tRNA(Gln) in the mitochondria. The reaction takes place in the presence of glutamine and ATP through an activated gamma-phospho-Glu-tRNA(Gln). The protein is Glutamyl-tRNA(Gln) amidotransferase subunit A, mitochondrial of Yarrowia lipolytica (strain CLIB 122 / E 150) (Yeast).